Consider the following 367-residue polypeptide: Ribosomal lysine N-methyltransferase 5 (367 aa).

The interval 55–74 (EGGRKKKRVRRRNKASSVEE) is disordered. A compositionally biased stretch (basic residues) spans 58 to 68 (RKKKRVRRRNK). S-adenosyl-L-methionine-binding positions include W110, 170 to 172 (GAG), D192, W256, and M288.

The protein belongs to the class I-like SAM-binding methyltransferase superfamily. RKM5 family.

In terms of biological role, S-adenosyl-L-methionine-dependent protein-lysine N-methyltransferase that monomethylates 60S ribosomal protein L1 (RPL1A and RPL1B) at 'Lys-46'. This Saccharomyces cerevisiae (strain RM11-1a) (Baker's yeast) protein is Ribosomal lysine N-methyltransferase 5 (RKM5).